A 478-amino-acid polypeptide reads, in one-letter code: Odorant receptor coreceptor (478 aa).

Over 1-41 the chain is Cytoplasmic; sequence MQVQPTKYVGLVADLMPNIRLMQASGHFLFRYVTGPILIRK. A helical membrane pass occupies residues 42–62; that stretch reads VYSWWTLAMVLIQFFAILGNL. The Extracellular portion of the chain corresponds to 63–73; that stretch reads ATNADDVNELT. The chain crosses the membrane as a helical span at residues 74–94; that stretch reads ANTITTLFFTHSVTKFIYFAV. Topologically, residues 95–133 are cytoplasmic; it reads NSENFYRTLAIWNQTNTHPLFAESDARYHSIALAKMRKL. A helical transmembrane segment spans residues 134–154; it reads LVLVMATTVLSVVAWVTITFF. At 155-188 the chain is on the extracellular side; sequence GESVKTVLDKATNETYTVDIPRLPIKSWYPWNAM. Asn167 carries an N-linked (GlcNAc...) asparagine glycan. Residues 189–209 traverse the membrane as a helical segment; it reads SGPAYIFSFIYQIYFLLFSMV. Topologically, residues 210-338 are cytoplasmic; the sequence is QSNLADVMFC…AIKYWVERHK (129 aa). The helical transmembrane segment at 339–361 threads the bilayer; the sequence is HVVRLVSAIGDTYGPALLLHMLT. The Extracellular portion of the chain corresponds to 362–382; it reads STIKLTLLAYQATKIDGVNVY. A helical membrane pass occupies residues 383–403; the sequence is GLTVIGYLCYALAQVFLFCIF. Residues 404–454 lie on the Cytoplasmic side of the membrane; the sequence is GNRLIEESSSVMEAAYSCHWYDGSEEAKTFVQIVCQQCQKAMTISGAKFFT. A helical transmembrane segment spans residues 455–475; that stretch reads VSLDLFASVLGAVVTYFMVLV. The Extracellular segment spans residues 476–478; sequence QLK.

Belongs to the insect chemoreceptor superfamily. Heteromeric odorant receptor channel (TC 1.A.69) family. Orco subfamily. As to quaternary structure, heterodimer with conventional odorant receptors (ORs). Complexes exist early in the endomembrane system in olfactory sensory neurons (OSNs), coupling these complexes to the conserved ciliary trafficking pathway. In terms of tissue distribution, expressed in olfactory and gustatory organs of both adult and immature stages. Highest expression is seen in adult antennae and the maxillary palps. Lower expression also seen in proboscis and legs. Within the antenna, expression originates in cell bodies and projects into the lumen of an individual sensillum, presumably along the dendritic extension of the neuron. Within the maxillary palps, expression is seen in a small number of cell bodies and in projections into the sensillar cone. Within the probiscus, expression is seen in a single type of sensillum on the outer surface of the labellar lobes.

Its subcellular location is the cell membrane. Its function is as follows. Odorant coreceptor which complexes with conventional odorant receptors (ORs) to form odorant-sensing units, providing sensitive and prolonged odorant signaling and calcium permeability. Orco is a universal and integral part of the functional odorant receptor, involved in the dendritic localization of other olfactory receptors. Can form functional ion channels in the absence of an odor-binding OR. Plays a key role in preferred attraction of females for humans over non-human hosts for blood feeding. Human attraction plays a crucial role in the transmission of Plasmodium protozoans by the mosquito leading to infection diseases like malaria. Also required for the response to N,N-Diethyl-meta-toluamide (DEET), the most widely used insect repellent worldwide. The sequence is that of Odorant receptor coreceptor (Orco) from Anopheles gambiae (African malaria mosquito).